A 321-amino-acid polypeptide reads, in one-letter code: Arabinan endo-1,5-alpha-L-arabinosidase A (321 aa).

The first 19 residues, methionine 1–glycine 19, serve as a signal peptide directing secretion. Aspartate 34 functions as the Proton acceptor in the catalytic mechanism. Catalysis depends on glutamate 200, which acts as the Proton donor. Asparagine 295 carries N-linked (GlcNAc...) asparagine glycosylation.

Belongs to the glycosyl hydrolase 43 family.

The enzyme catalyses Endohydrolysis of (1-&gt;5)-alpha-arabinofuranosidic linkages in (1-&gt;5)-arabinans.. It participates in glycan metabolism; L-arabinan degradation. In terms of biological role, its preferred substrate is linear 1,5-alpha-L-arabinan. The enzyme activity is progressively reduced as 1,5-alpha-chains become shorter or more highly substituted. The protein is Arabinan endo-1,5-alpha-L-arabinosidase A (abnA) of Aspergillus niger.